The following is an 88-amino-acid chain: Small ribosomal subunit protein bS20 (88 aa).

A disordered region spans residues 1-25; the sequence is MANSAQARKRARQAVAQNAHNSSLR.

The protein belongs to the bacterial ribosomal protein bS20 family.

Its function is as follows. Binds directly to 16S ribosomal RNA. The polypeptide is Small ribosomal subunit protein bS20 (Cupriavidus pinatubonensis (strain JMP 134 / LMG 1197) (Cupriavidus necator (strain JMP 134))).